Here is a 175-residue protein sequence, read N- to C-terminus: Apoptosis regulator Bcl-2 homolog (175 aa).

Positions 37–42 are mediates interaction with human NOP53 and localization to host nucleolus; sequence KLYITG. A helical transmembrane segment spans residues 153–173; sequence MTALLGSIALLATILAAVAMS.

This sequence belongs to the Bcl-2 family. In terms of assembly, interacts with human NOP53; may sequester ORF16 in host nucleolus and reduce its antiapoptotic activity. Interacts with ORF55.

It localises to the host membrane. The protein localises to the host mitochondrion. Its subcellular location is the host nucleus. It is found in the host nucleolus. Its function is as follows. Plays a role in the protection against apoptosis mediated by cytotoxic cells during the immune response to acute and persistent viral infection. Contributes therefore to latency establishment. Also plays a role in the inhibition of host starvation-induced autophagy which ultimately contributes to the viral chronic infection. Also participates in the viral genome replication within host nucleus. The protein is Apoptosis regulator Bcl-2 homolog (vBCL2) of Homo sapiens (Human).